The following is a 291-amino-acid chain: Membrane protein insertase YidC (291 aa).

The signal sequence occupies residues 1 to 19 (MKKKALLPLLLGVMVFLAG). Cys20 carries N-palmitoyl cysteine lipidation. Residue Cys20 is the site of S-diacylglycerol cysteine attachment. 4 helical membrane passes run 56–76 (YGIA…PFML), 134–154 (ALGC…YFVL), 170–190 (WFNL…LYFI), and 211–231 (MIVS…ALGL). The segment at 266–291 (FKENNSNSNKKGKNTQVVSKNNKKKK) is disordered.

It belongs to the OXA1/ALB3/YidC family. Type 2 subfamily.

The protein resides in the cell membrane. Functionally, required for the insertion and/or proper folding and/or complex formation of integral membrane proteins into the membrane. Involved in integration of membrane proteins that insert both dependently and independently of the Sec translocase complex, as well as at least some lipoproteins. This is Membrane protein insertase YidC from Staphylococcus haemolyticus (strain JCSC1435).